We begin with the raw amino-acid sequence, 407 residues long: Phosphopentomutase (407 aa).

6 residues coordinate Mn(2+): D10, D306, H311, D347, H348, and H359.

The protein belongs to the phosphopentomutase family. It depends on Mn(2+) as a cofactor.

The protein localises to the cytoplasm. The enzyme catalyses 2-deoxy-alpha-D-ribose 1-phosphate = 2-deoxy-D-ribose 5-phosphate. It carries out the reaction alpha-D-ribose 1-phosphate = D-ribose 5-phosphate. It functions in the pathway carbohydrate degradation; 2-deoxy-D-ribose 1-phosphate degradation; D-glyceraldehyde 3-phosphate and acetaldehyde from 2-deoxy-alpha-D-ribose 1-phosphate: step 1/2. Functionally, isomerase that catalyzes the conversion of deoxy-ribose 1-phosphate (dRib-1-P) and ribose 1-phosphate (Rib-1-P) to deoxy-ribose 5-phosphate (dRib-5-P) and ribose 5-phosphate (Rib-5-P), respectively. The sequence is that of Phosphopentomutase from Sodalis glossinidius (strain morsitans).